The chain runs to 764 residues: 1,4-alpha-glucan branching enzyme GlgB (764 aa).

A disordered region spans residues 1–46 (MSAARQPSPTVRDKAAPEPAAPAAPKGARAPRARRAAPPHGVRPAP). The span at 17 to 28 (PEPAAPAAPKGA) shows a compositional bias: low complexity. Catalysis depends on D440, which acts as the Nucleophile. E493 functions as the Proton donor in the catalytic mechanism.

Belongs to the glycosyl hydrolase 13 family. GlgB subfamily. In terms of assembly, monomer.

It catalyses the reaction Transfers a segment of a (1-&gt;4)-alpha-D-glucan chain to a primary hydroxy group in a similar glucan chain.. Its pathway is glycan biosynthesis; glycogen biosynthesis. Functionally, catalyzes the formation of the alpha-1,6-glucosidic linkages in glycogen by scission of a 1,4-alpha-linked oligosaccharide from growing alpha-1,4-glucan chains and the subsequent attachment of the oligosaccharide to the alpha-1,6 position. This is 1,4-alpha-glucan branching enzyme GlgB (glgB) from Kitasatospora aureofaciens (Streptomyces aureofaciens).